The primary structure comprises 103 residues: Zinc-containing ferredoxin (103 aa).

The segment at 1–36 is N-terminal extension; that stretch reads GIDPNYRTSKPVVGDHSGHKIYGPVESPKVLGVHGT. Residue histidine 19 participates in Zn(2+) binding. Residue lysine 29 is modified to N6-methyllysine. Residue histidine 34 coordinates Zn(2+). 4Fe-4S ferredoxin-type domains lie at 35-65 and 74-103; these read GTIV…WYET and KADP…VKPP. The [3Fe-4S] cluster site is built by cysteine 45 and cysteine 51. Cysteine 55 contacts [4Fe-4S] cluster. Residue aspartate 76 coordinates Zn(2+). Residues cysteine 83, cysteine 86, and cysteine 89 each coordinate [4Fe-4S] cluster. Cysteine 93 is a [3Fe-4S] cluster binding site.

[3Fe-4S] cluster serves as cofactor. Requires [4Fe-4S] cluster as cofactor. The cofactor is Zn(2+).

In terms of biological role, ferredoxins are iron-sulfur proteins that transfer electrons in a wide variety of metabolic reactions. This Sulfolobus acidocaldarius (strain ATCC 33909 / DSM 639 / JCM 8929 / NBRC 15157 / NCIMB 11770) protein is Zinc-containing ferredoxin (zfx).